A 597-amino-acid chain; its full sequence is Elongation factor 4 (597 aa).

A tr-type G domain is found at 2-184 (QHIRNFSIIA…AIVARVPSPE (183 aa)). Residues 14–19 (DHGKST) and 131–134 (NKMD) contribute to the GTP site.

Belongs to the TRAFAC class translation factor GTPase superfamily. Classic translation factor GTPase family. LepA subfamily.

Its subcellular location is the cell inner membrane. The catalysed reaction is GTP + H2O = GDP + phosphate + H(+). Required for accurate and efficient protein synthesis under certain stress conditions. May act as a fidelity factor of the translation reaction, by catalyzing a one-codon backward translocation of tRNAs on improperly translocated ribosomes. Back-translocation proceeds from a post-translocation (POST) complex to a pre-translocation (PRE) complex, thus giving elongation factor G a second chance to translocate the tRNAs correctly. Binds to ribosomes in a GTP-dependent manner. The protein is Elongation factor 4 of Bordetella avium (strain 197N).